Reading from the N-terminus, the 592-residue chain is E3 ubiquitin-protein ligase RNF180 (592 aa).

Topologically, residues 1–564 (MKRSKELITK…DSRGWWFDMD (564 aa)) are cytoplasmic. Residue serine 230 is modified to Phosphoserine. The RING-type zinc-finger motif lies at 432–474 (CAVCLDVYFNPYMCYPCRHIFCEPCLRTLAKDNPSSTPCPLCR). A helical membrane pass occupies residues 565 to 585 (MVIIYIYSVNWVIGFIVFCFL). Residues 586–592 (CYFFFPF) are Extracellular-facing.

As to quaternary structure, interacts with ZIC2.

It localises to the endoplasmic reticulum membrane. Its subcellular location is the nucleus envelope. The catalysed reaction is S-ubiquitinyl-[E2 ubiquitin-conjugating enzyme]-L-cysteine + [acceptor protein]-L-lysine = [E2 ubiquitin-conjugating enzyme]-L-cysteine + N(6)-ubiquitinyl-[acceptor protein]-L-lysine.. It functions in the pathway protein modification; protein ubiquitination. In terms of biological role, E3 ubiquitin-protein ligase which promotes polyubiquitination and degradation by the proteasome pathway of ZIC2. In Pongo abelii (Sumatran orangutan), this protein is E3 ubiquitin-protein ligase RNF180 (RNF180).